The primary structure comprises 353 residues: Photosystem II protein D1 (353 aa).

The residue at position 2 (Thr-2) is an N-acetylthreonine. Phosphothreonine is present on Thr-2. A run of 3 helical transmembrane segments spans residues 29-46 (YIGW…TATS), 118-133 (HFLL…EWEL), and 142-156 (WIAV…AATA). His-118 is a binding site for chlorophyll a. Tyr-126 contacts pheophytin a. The [CaMn4O5] cluster site is built by Asp-170 and Glu-189. A helical transmembrane segment spans residues 197–218 (FHMLGVAGVFGGSLFSAMHGSL). A chlorophyll a-binding site is contributed by His-198. Residues His-215 and 264–265 (SF) each bind a quinone. Residue His-215 participates in Fe cation binding. His-272 serves as a coordination point for Fe cation. Residues 274–288 (FLAAWPVVGIWFTAL) form a helical membrane-spanning segment. [CaMn4O5] cluster is bound by residues His-332, Glu-333, Asp-342, and Ala-344. The propeptide occupies 345 to 353 (SVEAPSTNG).

This sequence belongs to the reaction center PufL/M/PsbA/D family. In terms of assembly, PSII is composed of 1 copy each of membrane proteins PsbA, PsbB, PsbC, PsbD, PsbE, PsbF, PsbH, PsbI, PsbJ, PsbK, PsbL, PsbM, PsbT, PsbX, PsbY, PsbZ, Psb30/Ycf12, at least 3 peripheral proteins of the oxygen-evolving complex and a large number of cofactors. It forms dimeric complexes. Requires The D1/D2 heterodimer binds P680, chlorophylls that are the primary electron donor of PSII, and subsequent electron acceptors. It shares a non-heme iron and each subunit binds pheophytin, quinone, additional chlorophylls, carotenoids and lipids. D1 provides most of the ligands for the Mn4-Ca-O5 cluster of the oxygen-evolving complex (OEC). There is also a Cl(-1) ion associated with D1 and D2, which is required for oxygen evolution. The PSII complex binds additional chlorophylls, carotenoids and specific lipids. as cofactor. Post-translationally, tyr-161 forms a radical intermediate that is referred to as redox-active TyrZ, YZ or Y-Z. C-terminally processed by CTPA; processing is essential to allow assembly of the oxygen-evolving complex and thus photosynthetic growth.

The protein resides in the plastid. Its subcellular location is the chloroplast thylakoid membrane. It catalyses the reaction 2 a plastoquinone + 4 hnu + 2 H2O = 2 a plastoquinol + O2. In terms of biological role, photosystem II (PSII) is a light-driven water:plastoquinone oxidoreductase that uses light energy to abstract electrons from H(2)O, generating O(2) and a proton gradient subsequently used for ATP formation. It consists of a core antenna complex that captures photons, and an electron transfer chain that converts photonic excitation into a charge separation. The D1/D2 (PsbA/PsbD) reaction center heterodimer binds P680, the primary electron donor of PSII as well as several subsequent electron acceptors. The chain is Photosystem II protein D1 from Acorus calamus (Sweet flag).